A 458-amino-acid polypeptide reads, in one-letter code: Sugar transporter ERD6-like 10 (458 aa).

The next 12 helical transmembrane spans lie at 17–37, 66–86, 96–116, 119–139, 150–170, 174–194, 257–277, 292–312, 319–339, 350–370, 393–413, and 419–439; these read ITACVILSTFVAVCSSFSYGC, FLNLGGAVGALFSGQLAVILG, LFCIFGWLSIAFAKNVLWLDL, ISLGIGVGLTSYVVPVYIAEI, ASTLLLQNSGISLIYFFGTVI, VLAVIGALPCFIPVIGIYFIP, LVVGIGLMLIQQLSGASGITY, LGSMIFGVFVIPKALVGLILV, PLLLASAVGMSIGSLLIGVSF, FIPVFVFINILVYFGFFAIGI, IVALTSWTTGWFVSYGFNFMF, and GTFYIFAMVGGLSLLFIWMLV.

The protein belongs to the major facilitator superfamily. Sugar transporter (TC 2.A.1.1) family.

The protein localises to the membrane. Sugar transporter. The polypeptide is Sugar transporter ERD6-like 10 (Arabidopsis thaliana (Mouse-ear cress)).